The sequence spans 100 residues: Mitochondrial zinc maintenance protein 1, mitochondrial (100 aa).

Belongs to the complex I LYR family. MZM1 subfamily. Interacts with RIP1.

It is found in the mitochondrion matrix. Its function is as follows. Assembly factor required for Rieske Fe-S protein RIP1 incorporation into the cytochrome b-c1 (CIII) complex. Functions as a chaperone, binding to this subunit within the mitochondrial matrix and stabilizing it prior to its translocation and insertion into the late CIII dimeric intermediate within the mitochondrial inner membrane. Modulates the mitochondrial matrix zinc pool. This chain is Mitochondrial zinc maintenance protein 1, mitochondrial (new18), found in Schizosaccharomyces pombe (strain 972 / ATCC 24843) (Fission yeast).